The sequence spans 44 residues: Cytochrome b559 subunit beta (44 aa).

A helical transmembrane segment spans residues 19–35; sequence WLAIHGLAIPTVFFLGA. His-23 contributes to the heme binding site.

Belongs to the PsbE/PsbF family. As to quaternary structure, heterodimer of an alpha subunit and a beta subunit. PSII is composed of 1 copy each of membrane proteins PsbA, PsbB, PsbC, PsbD, PsbE, PsbF, PsbH, PsbI, PsbJ, PsbK, PsbL, PsbM, PsbT, PsbX, PsbY, PsbZ, Psb30/Ycf12, at least 3 peripheral proteins of the oxygen-evolving complex and a large number of cofactors. It forms dimeric complexes. It depends on heme b as a cofactor.

The protein localises to the plastid. It is found in the chloroplast thylakoid membrane. This b-type cytochrome is tightly associated with the reaction center of photosystem II (PSII). PSII is a light-driven water:plastoquinone oxidoreductase that uses light energy to abstract electrons from H(2)O, generating O(2) and a proton gradient subsequently used for ATP formation. It consists of a core antenna complex that captures photons, and an electron transfer chain that converts photonic excitation into a charge separation. The sequence is that of Cytochrome b559 subunit beta from Porphyra purpurea (Red seaweed).